Consider the following 518-residue polypeptide: MASSSSISNHKIPNTLMFLVIVNFLYLIQTNSAVSISSNSNSHFSRFSRHRSSPSSKTKQGFLATVQESMNHALLARSLAFNLTLSHRTVQTHTFDPIHDCLELLDDTLDMLSRIHADNDEEDVHTWLSAALTNQDTCEQSLQEKSESYKHGLAMDFVARNLTGLLTSSLDLFVSVKSKHRKLLSKQEYFPTFVPSSEQRRLLEAPVEELNVDAVVAPDGSGTHKTIGEALLSTSLASSGGRTKIYLKAGTYHENINIPTKQKNVMLVGDGKGKTVIVGSRSNRGGWTTYKTATVAAMGEGFIARDMTFVNNAGPKSEQAVALRVGADKSVVHRCSVEGYQDSLYTHSKRQFYRETDITGTVDFIFGNSAVVFQSCNIAARKPLPGQRNFVTAQGRSNPGQNTGIAIQNCRITAESMTYLGRPWKEYSRTVVMQSFIGGSIHPSGWSPWSGGFGLKSLFYGEYGNSGPGSSVSGRVKWSGCHPSLTVTEAEKFTVASFIDGNIWLPSTGVSFDPGLVN.

Residues 1–33 form the signal peptide; it reads MASSSSISNHKIPNTLMFLVIVNFLYLIQTNSA. Residues 30–172 are pectinesterase inhibitor 16; it reads TNSAVSISSN…TGLLTSSLDL (143 aa). Asn-82 and Asn-161 each carry an N-linked (GlcNAc...) asparagine glycan. The pectinesterase 16 stretch occupies residues 213–502; that stretch reads DAVVAPDGSG…FTVASFIDGN (290 aa). Substrate-binding residues include Thr-289 and Gln-319. Asp-342 acts as the Proton donor; for pectinesterase activity in catalysis. The active-site Nucleophile; for pectinesterase activity is Asp-363. Substrate-binding residues include Arg-422 and Trp-424.

In the N-terminal section; belongs to the PMEI family. This sequence in the C-terminal section; belongs to the pectinesterase family. As to expression, expressed in siliques and floral stems.

Its subcellular location is the secreted. It localises to the cell wall. The enzyme catalyses [(1-&gt;4)-alpha-D-galacturonosyl methyl ester](n) + n H2O = [(1-&gt;4)-alpha-D-galacturonosyl](n) + n methanol + n H(+). The protein operates within glycan metabolism; pectin degradation; 2-dehydro-3-deoxy-D-gluconate from pectin: step 1/5. Its function is as follows. Acts in the modification of cell walls via demethylesterification of cell wall pectin. This Arabidopsis thaliana (Mouse-ear cress) protein is Probable pectinesterase/pectinesterase inhibitor 16 (PME16).